Here is a 286-residue protein sequence, read N- to C-terminus: 2-hydroxy-6-oxo-6-phenylhexa-2,4-dienoate hydrolase (286 aa).

Residues 42–43 (GG), asparagine 51, asparagine 111, serine 180, and arginine 190 contribute to the substrate site. Catalysis depends on histidine 265, which acts as the Proton acceptor. Residue tryptophan 266 coordinates substrate.

It belongs to the AB hydrolase superfamily. BphD family. As to quaternary structure, homodimer.

It carries out the reaction 2,6-dioxo-6-phenylhexa-3-enoate + H2O = 2-oxopent-4-enoate + benzoate + H(+). It participates in xenobiotic degradation; biphenyl degradation; 2-hydroxy-2,4-pentadienoate and benzoate from biphenyl: step 4/4. In terms of biological role, catalyzes an unusual C-C bond hydrolysis of 2-hydroxy-6-oxo-6-phenylhexa-2,4-dienoic acid (HOPDA) to produce benzoic acid and 2-hydroxy-2,4-pentadienoic acid (HPD). The protein is 2-hydroxy-6-oxo-6-phenylhexa-2,4-dienoate hydrolase of Polaromonas naphthalenivorans (strain CJ2).